A 328-amino-acid chain; its full sequence is Malate dehydrogenase (328 aa).

Position 11–17 (11–17 (GAAGQIG)) interacts with NAD(+). Substrate contacts are provided by Arg-94 and Arg-100. NAD(+) contacts are provided by residues Asn-107, Gln-114, and 131–133 (VGN). Positions 133 and 164 each coordinate substrate. Residue His-189 is the Proton acceptor of the active site.

It belongs to the LDH/MDH superfamily. MDH type 2 family.

It catalyses the reaction (S)-malate + NAD(+) = oxaloacetate + NADH + H(+). Catalyzes the reversible oxidation of malate to oxaloacetate. In Acinetobacter baylyi (strain ATCC 33305 / BD413 / ADP1), this protein is Malate dehydrogenase.